The primary structure comprises 397 residues: Chorismate synthase (397 aa).

Residues R40 and R46 each contribute to the NADP(+) site. Residues 129 to 131, 257 to 258, G302, 317 to 321, and R343 contribute to the FMN site; these read RSS, QA, and KPISS.

Belongs to the chorismate synthase family. As to quaternary structure, homotetramer. Requires FMNH2 as cofactor.

The enzyme catalyses 5-O-(1-carboxyvinyl)-3-phosphoshikimate = chorismate + phosphate. It functions in the pathway metabolic intermediate biosynthesis; chorismate biosynthesis; chorismate from D-erythrose 4-phosphate and phosphoenolpyruvate: step 7/7. Its function is as follows. Catalyzes the anti-1,4-elimination of the C-3 phosphate and the C-6 proR hydrogen from 5-enolpyruvylshikimate-3-phosphate (EPSP) to yield chorismate, which is the branch point compound that serves as the starting substrate for the three terminal pathways of aromatic amino acid biosynthesis. This reaction introduces a second double bond into the aromatic ring system. The protein is Chorismate synthase of Chlorobium phaeobacteroides (strain DSM 266 / SMG 266 / 2430).